Reading from the N-terminus, the 321-residue chain is Aldose reductase C (321 aa).

An NADP(+)-binding site is contributed by 22 to 31; it reads GNQIPSIGLG. The Proton donor role is filled by Tyr62. His124 provides a ligand contact to substrate. 227–281 contributes to the NADP(+) binding site; it reads SPLGQGKCDFFSNKILKSIAGKYKKSVANVIFKWLNQRGIAAIPKSGNHSRIIEN.

It belongs to the aldo/keto reductase family.

It carries out the reaction an alditol + NAD(+) = an aldose + NADH + H(+). The enzyme catalyses an alditol + NADP(+) = an aldose + NADPH + H(+). In terms of biological role, catalyzes the NADPH-dependent reduction of a wide variety of carbonyl-containing compounds to their corresponding alcohols with a broad range of catalytic efficiencies. The protein is Aldose reductase C (alrC) of Dictyostelium discoideum (Social amoeba).